We begin with the raw amino-acid sequence, 311 residues long: tRNA pseudouridine synthase B (311 aa).

Asp-39 (nucleophile) is an active-site residue. Residues Arg-237–Glu-268 are disordered. Low complexity predominate over residues Ala-254–Glu-268.

This sequence belongs to the pseudouridine synthase TruB family. Type 1 subfamily.

It carries out the reaction uridine(55) in tRNA = pseudouridine(55) in tRNA. In terms of biological role, responsible for synthesis of pseudouridine from uracil-55 in the psi GC loop of transfer RNAs. This Paenarthrobacter aurescens (strain TC1) protein is tRNA pseudouridine synthase B.